Here is a 57-residue protein sequence, read N- to C-terminus: Large ribosomal subunit protein bL32c (57 aa).

The protein belongs to the bacterial ribosomal protein bL32 family.

It is found in the plastid. It localises to the chloroplast. In Nandina domestica (Heavenly bamboo), this protein is Large ribosomal subunit protein bL32c.